Here is a 219-residue protein sequence, read N- to C-terminus: Urease subunit gamma/beta (219 aa).

The segment at 1 to 101 is urease gamma; the sequence is MFLTPREQEK…LVTVRNPIKS (101 aa). The segment at 102–219 is urease beta; the sequence is SKKTLNTYII…IKRAKERGFA (118 aa).

The protein in the N-terminal section; belongs to the urease gamma subunit family. It in the C-terminal section; belongs to the urease beta subunit family. As to quaternary structure, heterohexamer of 3 UreC (alpha) and 3 UreAB (gamma/beta) subunits.

It localises to the cytoplasm. It catalyses the reaction urea + 2 H2O + H(+) = hydrogencarbonate + 2 NH4(+). It participates in nitrogen metabolism; urea degradation; CO(2) and NH(3) from urea (urease route): step 1/1. The sequence is that of Urease subunit gamma/beta from Sulfurisphaera tokodaii (strain DSM 16993 / JCM 10545 / NBRC 100140 / 7) (Sulfolobus tokodaii).